The following is a 308-amino-acid chain: N-acetyl-gamma-glutamyl-phosphate reductase (308 aa).

C116 is a catalytic residue.

The protein belongs to the NAGSA dehydrogenase family. Type 2 subfamily.

It localises to the cytoplasm. The enzyme catalyses N-acetyl-L-glutamate 5-semialdehyde + phosphate + NADP(+) = N-acetyl-L-glutamyl 5-phosphate + NADPH + H(+). The protein operates within amino-acid biosynthesis; L-arginine biosynthesis; N(2)-acetyl-L-ornithine from L-glutamate: step 3/4. Its function is as follows. Catalyzes the NADPH-dependent reduction of N-acetyl-5-glutamyl phosphate to yield N-acetyl-L-glutamate 5-semialdehyde. In Mesorhizobium japonicum (strain LMG 29417 / CECT 9101 / MAFF 303099) (Mesorhizobium loti (strain MAFF 303099)), this protein is N-acetyl-gamma-glutamyl-phosphate reductase.